Here is a 522-residue protein sequence, read N- to C-terminus: GMP synthase [glutamine-hydrolyzing] (522 aa).

Positions 9 to 204 constitute a Glutamine amidotransferase type-1 domain; sequence KILILDFGAQ…VVDICGCQTL (196 aa). Catalysis depends on C86, which acts as the Nucleophile. Active-site residues include H178 and E180. One can recognise a GMPS ATP-PPase domain in the interval 205–397; the sequence is WTAANIIEDQ…LGLPHAMVYR (193 aa). Position 232-238 (232-238) interacts with ATP; sequence SGGVDSS.

In terms of assembly, homodimer.

The catalysed reaction is XMP + L-glutamine + ATP + H2O = GMP + L-glutamate + AMP + diphosphate + 2 H(+). Its pathway is purine metabolism; GMP biosynthesis; GMP from XMP (L-Gln route): step 1/1. Functionally, catalyzes the synthesis of GMP from XMP. The polypeptide is GMP synthase [glutamine-hydrolyzing] (Xylella fastidiosa (strain M12)).